The sequence spans 207 residues: Small ribosomal subunit protein uS4A (207 aa).

An S4 RNA-binding domain is found at 98–161 (RRLDNVVYRM…REHKRIKELA (64 aa)).

Belongs to the universal ribosomal protein uS4 family. In terms of assembly, part of the 30S ribosomal subunit. Contacts protein S5. The interaction surface between S4 and S5 is involved in control of translational fidelity.

One of the primary rRNA binding proteins, it binds directly to 16S rRNA where it nucleates assembly of the body of the 30S subunit. Its function is as follows. With S5 and S12 plays an important role in translational accuracy. The protein is Small ribosomal subunit protein uS4A of Symbiobacterium thermophilum (strain DSM 24528 / JCM 14929 / IAM 14863 / T).